The following is a 326-amino-acid chain: MTAIRKNDMNYTLDDFTKLEKIGEGTYGVVYKGRNRRTQAMVAMKKIRLESEDEGVPSTAVREISLLKELQHPNVVGLEAVIMQENRLYLIFEFLSYDLKRYMDTLSKEEYLPSETLKSYTFQILQAMCFCHQRRVIHRDLKPQNLLVDEKGAIKLADFGLARAIGIPIRVYTHEVVTLWYRAPEILMGAQRYSMGVDMWSIGCIFAEMATKKPLFQGDSEIDELFRIFRILGTPTELEWNGVESLPDYKATFPKWRENFLRDKFYDKKSGNYLMDEDAFSLLEGLLIYDPALRISSKKALHHPYFNDIDTSKLPAGNYRGELQLE.

The 291-residue stretch at 16 to 306 folds into the Protein kinase domain; the sequence is FTKLEKIGEG…SKKALHHPYF (291 aa). ATP contacts are provided by residues 22–30 and lysine 45; that span reads IGEGTYGVV. Aspartate 140 serves as the catalytic Proton acceptor.

This sequence belongs to the protein kinase superfamily. CMGC Ser/Thr protein kinase family. CDC2/CDKX subfamily. In terms of assembly, forms a stable but non-covalent complex with a regulatory subunit and with a cyclin. Interacts with cks-1.

The protein resides in the nucleus. It is found in the cytoplasm. The protein localises to the cytoskeleton. Its subcellular location is the microtubule organizing center. It localises to the centrosome. The catalysed reaction is L-seryl-[protein] + ATP = O-phospho-L-seryl-[protein] + ADP + H(+). It catalyses the reaction L-threonyl-[protein] + ATP = O-phospho-L-threonyl-[protein] + ADP + H(+). It carries out the reaction [DNA-directed RNA polymerase] + ATP = phospho-[DNA-directed RNA polymerase] + ADP + H(+). Its activity is regulated as follows. Phosphorylation both activates and inactivates the enzyme depending on the site of phosphorylation. Functionally, plays a key role in the control of the eukaryotic cell cycle. Required for entry into S-phase and mitosis. Acts as a component of the kinase complex that phosphorylates the repetitive C-terminus of RNA polymerase II. May function in concert with npp-16 to arrest prophase blastomeres in response to anoxia. The protein is Cyclin-dependent kinase 1 of Caenorhabditis briggsae.